The primary structure comprises 245 residues: Ubiquinone/menaquinone biosynthesis C-methyltransferase UbiE (245 aa).

S-adenosyl-L-methionine contacts are provided by residues Thr71, Asp92, and 118–119; that span reads DA.

The protein belongs to the class I-like SAM-binding methyltransferase superfamily. MenG/UbiE family.

The catalysed reaction is a 2-demethylmenaquinol + S-adenosyl-L-methionine = a menaquinol + S-adenosyl-L-homocysteine + H(+). It catalyses the reaction a 2-methoxy-6-(all-trans-polyprenyl)benzene-1,4-diol + S-adenosyl-L-methionine = a 5-methoxy-2-methyl-3-(all-trans-polyprenyl)benzene-1,4-diol + S-adenosyl-L-homocysteine + H(+). It functions in the pathway quinol/quinone metabolism; menaquinone biosynthesis; menaquinol from 1,4-dihydroxy-2-naphthoate: step 2/2. The protein operates within cofactor biosynthesis; ubiquinone biosynthesis. Functionally, methyltransferase required for the conversion of demethylmenaquinol (DMKH2) to menaquinol (MKH2) and the conversion of 2-polyprenyl-6-methoxy-1,4-benzoquinol (DDMQH2) to 2-polyprenyl-3-methyl-6-methoxy-1,4-benzoquinol (DMQH2). The polypeptide is Ubiquinone/menaquinone biosynthesis C-methyltransferase UbiE (Neisseria meningitidis serogroup C (strain 053442)).